Here is a 505-residue protein sequence, read N- to C-terminus: MFS-type transporter oryN (505 aa).

Positions 1–54 (MAVAELPNIVSTDSSPSPHPGSRLSSEPTDIESQKAPSNAEPKTDPNLVTWDGP) are disordered. Transmembrane regions (helical) follow at residues 69 to 89 (AFVT…SSIF), 106 to 126 (VVTL…PVWG), 135 to 155 (KWPM…VAVA), 166 to 186 (FLTG…LVDM), 193 to 213 (GVAM…APLM), 226 to 246 (FTQW…VFGL), 280 to 300 (GIKD…VTEP), 301 to 321 (ILLL…LVFV), 337 to 357 (ISAL…AIVV), 376 to 396 (LPLM…FAWT), 401 to 421 (IHWA…YMVF), 440 to 460 (IGAN…FGPF), and 468 to 488 (AWAS…PVLF).

This sequence belongs to the major facilitator superfamily. CAR1 family.

The protein resides in the membrane. In terms of biological role, MFS-type transporter; part of the gene cluster that mediates the biosynthesis of oryzines, natural products with an unusual maleidride backbone. The protein is MFS-type transporter oryN of Aspergillus oryzae (strain ATCC 42149 / RIB 40) (Yellow koji mold).